The sequence spans 511 residues: MMLEGEFHTHMLPEFMIERRQDRCIRCRVCERQCGFNVHWYDEEMDMMREDEMKCVGCQRCAVMCPTNALVVKPHPGNYKPNANWTRERLQDLKKQAETGGVLLTGSGNDKPYRIYWDHIVLNASQVTNPSIDPLREPMELRTFLGRKQDRLEFKYSEDFEDIEITTELYPNVQIETPIVFSAMSYGAISYQAFKSLAMAASEFGTLFNTGEGGLPKELRKYGKNAIVQCASGRFGVDPEYLNVAAVVEIKIGQGAKPGIGGHLPGEKVTLPISVTRMIPEGTDALSPAPQHDIYSIEDLSMLIYALKEATNYEKPVSVKIAAVHNVAAIASGMVRAGADIIAIDGLRGGTGAAPKMIRDNVGIPVELALAAVDQRLRDEGIRNKASILVAGGFRCSADVVKAIALGADAVYIGTPALVAMGCTLCQKCHTGICNWGICTQDPYLAKRLNPEITAKRLVNLLRAWSHEIKEMLGGMGINAIESLRGNREQLRGVGLEDWELEVLGIKGAGE.

4Fe-4S ferredoxin-type domains are found at residues F15–E44 and D46–H75. 8 residues coordinate [4Fe-4S] cluster: C24, C27, C30, C34, C55, C58, C61, and C65.

It belongs to the glutamate synthase family. Requires FMN as cofactor.

The enzyme catalyses 2 L-glutamate + NADP(+) = L-glutamine + 2-oxoglutarate + NADPH + H(+). This chain is Archaeal glutamate synthase [NADPH], found in Archaeoglobus fulgidus (strain ATCC 49558 / DSM 4304 / JCM 9628 / NBRC 100126 / VC-16).